Here is a 166-residue protein sequence, read N- to C-terminus: UPF0134 protein MPN_138 (166 aa).

This sequence belongs to the UPF0134 family.

The polypeptide is UPF0134 protein MPN_138 (Mycoplasma pneumoniae (strain ATCC 29342 / M129 / Subtype 1) (Mycoplasmoides pneumoniae)).